Reading from the N-terminus, the 341-residue chain is Serine/threonine-protein kinase pdik1l (341 aa).

Residues 8-332 (YELIQEVGRG…FELELRLVRI (325 aa)) enclose the Protein kinase domain. 14–22 (VGRGSYGVV) serves as a coordination point for ATP. D164 functions as the Proton acceptor in the catalytic mechanism.

This sequence belongs to the protein kinase superfamily. Ser/Thr protein kinase family.

The protein localises to the nucleus. It catalyses the reaction L-seryl-[protein] + ATP = O-phospho-L-seryl-[protein] + ADP + H(+). The enzyme catalyses L-threonyl-[protein] + ATP = O-phospho-L-threonyl-[protein] + ADP + H(+). In Danio rerio (Zebrafish), this protein is Serine/threonine-protein kinase pdik1l (pdik1l).